The following is a 241-amino-acid chain: CRISPR-associated endoribonuclease Cas6 2 (241 aa).

Catalysis depends on Tyr28, which acts as the Proton acceptor. Residue His40 is the Proton donor of the active site.

This sequence belongs to the CRISPR-associated protein Cas6/Cse3/CasE family.

In terms of biological role, CRISPR (clustered regularly interspaced short palindromic repeat) is an adaptive immune system that provides protection against mobile genetic elements (viruses, transposable elements and conjugative plasmids). CRISPR clusters contain sequences complementary to antecedent mobile elements and target invading nucleic acids. CRISPR clusters are transcribed and processed into CRISPR RNA (crRNA). This protein processes pre-crRNA into individual crRNA units. The protein is CRISPR-associated endoribonuclease Cas6 2 (cas6b) of Methanocaldococcus jannaschii (strain ATCC 43067 / DSM 2661 / JAL-1 / JCM 10045 / NBRC 100440) (Methanococcus jannaschii).